The primary structure comprises 551 residues: UvrABC system protein C (551 aa).

In terms of domain architecture, GIY-YIG spans 12 to 87; that stretch reads EKPGVYIFKN…IFKHKPKYNI (76 aa). The 36-residue stretch at 193-228 folds into the UVR domain; the sequence is EFVKDYIEQKMNYHSKMLDFENAAKYRDLLLSFEKL.

This sequence belongs to the UvrC family. In terms of assembly, interacts with UvrB in an incision complex.

The protein localises to the cytoplasm. In terms of biological role, the UvrABC repair system catalyzes the recognition and processing of DNA lesions. UvrC both incises the 5' and 3' sides of the lesion. The N-terminal half is responsible for the 3' incision and the C-terminal half is responsible for the 5' incision. The protein is UvrABC system protein C of Thermosipho africanus (strain TCF52B).